We begin with the raw amino-acid sequence, 290 residues long: Porphobilinogen deaminase (290 aa).

S-(dipyrrolylmethanemethyl)cysteine is present on Cys237.

This sequence belongs to the HMBS family. As to quaternary structure, monomer. It depends on dipyrromethane as a cofactor.

It catalyses the reaction 4 porphobilinogen + H2O = hydroxymethylbilane + 4 NH4(+). Its pathway is porphyrin-containing compound metabolism; protoporphyrin-IX biosynthesis; coproporphyrinogen-III from 5-aminolevulinate: step 2/4. In terms of biological role, tetrapolymerization of the monopyrrole PBG into the hydroxymethylbilane pre-uroporphyrinogen in several discrete steps. The sequence is that of Porphobilinogen deaminase from Clostridium botulinum (strain Kyoto / Type A2).